A 323-amino-acid chain; its full sequence is Mycothiol acetyltransferase (323 aa).

Glu44 contributes to the 1D-myo-inositol 2-(L-cysteinylamino)-2-deoxy-alpha-D-glucopyranoside binding site. An acetyl-CoA-binding site is contributed by 98-100; that stretch reads LAV. Residues 173–323 enclose the N-acetyltransferase domain; sequence VSLRAFIPGQ…DVMYGPKNGG (151 aa). Residues Glu200, Lys240, and Glu253 each contribute to the 1D-myo-inositol 2-(L-cysteinylamino)-2-deoxy-alpha-D-glucopyranoside site. Acetyl-CoA-binding positions include 257-259 and 264-270; these read VGV and QGMGLGK. Tyr291 is a 1D-myo-inositol 2-(L-cysteinylamino)-2-deoxy-alpha-D-glucopyranoside binding site.

This sequence belongs to the acetyltransferase family. MshD subfamily. As to quaternary structure, monomer.

It catalyses the reaction 1D-myo-inositol 2-(L-cysteinylamino)-2-deoxy-alpha-D-glucopyranoside + acetyl-CoA = mycothiol + CoA + H(+). Catalyzes the transfer of acetyl from acetyl-CoA to desacetylmycothiol (Cys-GlcN-Ins) to form mycothiol. This Arthrobacter sp. (strain FB24) protein is Mycothiol acetyltransferase.